Reading from the N-terminus, the 349-residue chain is Flap endonuclease 1-B (349 aa).

An N-domain region spans residues 1 to 105; the sequence is MGIKGLTKLL…GELAKRLARR (105 aa). Asp-34 provides a ligand contact to Mg(2+). Arg-71 serves as a coordination point for DNA. Residues Asp-87, Glu-159, Glu-161, Asp-180, and Asp-182 each coordinate Mg(2+). The tract at residues 123–254 is I-domain; the sequence is DMEKYSKRTV…QTALKLIRQH (132 aa). Glu-159 is a binding site for DNA. Residues Gly-232 and Asp-234 each coordinate DNA. Mg(2+) is bound at residue Asp-234.

This sequence belongs to the XPG/RAD2 endonuclease family. FEN1 subfamily. As to quaternary structure, interacts with PCNA. Three molecules of FEN1 bind to one PCNA trimer with each molecule binding to one PCNA monomer. PCNA stimulates the nuclease activity without altering cleavage specificity. It depends on Mg(2+) as a cofactor. Phosphorylated. Phosphorylation upon DNA damage induces relocalization to the nuclear plasma.

It is found in the nucleus. Its subcellular location is the nucleolus. It localises to the nucleoplasm. The protein localises to the mitochondrion. Structure-specific nuclease with 5'-flap endonuclease and 5'-3' exonuclease activities involved in DNA replication and repair. During DNA replication, cleaves the 5'-overhanging flap structure that is generated by displacement synthesis when DNA polymerase encounters the 5'-end of a downstream Okazaki fragment. It enters the flap from the 5'-end and then tracks to cleave the flap base, leaving a nick for ligation. Also involved in the long patch base excision repair (LP-BER) pathway, by cleaving within the apurinic/apyrimidinic (AP) site-terminated flap. Acts as a genome stabilization factor that prevents flaps from equilibrating into structures that lead to duplications and deletions. Also possesses 5'-3' exonuclease activity on nicked or gapped double-stranded DNA, and exhibits RNase H activity. Also involved in replication and repair of rDNA and in repairing mitochondrial DNA. The sequence is that of Flap endonuclease 1-B from Physcomitrium patens (Spreading-leaved earth moss).